The primary structure comprises 519 residues: Cyclic AMP-responsive element-binding protein 3-like protein 2 (519 aa).

Topologically, residues 1–374 (MEIMDSGEPF…SCRVTGTQTS (374 aa)) are cytoplasmic. 3 disordered regions span residues 58–77 (GRGD…PVPP), 85–121 (YSLC…MEQE), and 193–261 (GLEC…SGPL). A compositionally biased stretch (acidic residues) spans 109–119 (ADSESDEWPME). 2 stretches are compositionally biased toward low complexity: residues 205–217 (SSVG…SQSP) and 240–249 (PSSLSSSPLL). Residues 291–354 (ALKKIRRKIK…KSLLQQLHSL (64 aa)) form the bZIP domain. The segment at 293-322 (KKIRRKIKNKISAQESRRKKKEYVDALEKK) is basic motif. The leucine-zipper stretch occupies residues 333–354 (LRRKVENLECTNKSLLQQLHSL). A helical; Signal-anchor for type II membrane protein transmembrane segment spans residues 375 to 395 (TCLMVVVLCFSLFLGSFYPGL). At 396 to 519 (SPCSSITKAD…QLDRTVNETS (124 aa)) the chain is on the lumenal side. The S1P recognition motif lies at 423-426 (RSLL). Residues asparagine 485, asparagine 503, and asparagine 516 are each glycosylated (N-linked (GlcNAc...) asparagine).

Belongs to the bZIP family. ATF subfamily. Binds DNA as a dimer. In terms of processing, upon ER stress, translocated to the Golgi apparatus, where it is processed by regulated intramembrane proteolysis (RIP) to release the cytosol-facing N-terminal transcription factor domain. The cleavage is performed sequentially by site-1 and site-2 proteases (S1P/mbtps1 and S2P/mbtps2).

It localises to the endoplasmic reticulum membrane. Its subcellular location is the nucleus. Its function is as follows. Transcription factor involved in unfolded protein response (UPR). In the absence of endoplasmic reticulum (ER) stress, inserted into ER membranes, with N-terminal DNA-binding and transcription activation domains oriented toward the cytosolic face of the membrane. In response to ER stress, transported to the Golgi, where it is cleaved in a site-specific manner by resident proteases S1P/mbtps1 and S2P/mbtps2. The released N-terminal cytosolic domain is translocated to the nucleus to effect transcription of specific target genes. Plays a critical role in chondrogenesis. May protect neuroblastoma cells from ER stress-induced death. In vitro activates transcription of target genes via direct binding to the CRE site. The chain is Cyclic AMP-responsive element-binding protein 3-like protein 2 (creb3l2) from Danio rerio (Zebrafish).